Reading from the N-terminus, the 1285-residue chain is ABC-type transporter fsqE (1285 aa).

Positions Val54–Ser343 constitute an ABC transmembrane type-1 1 domain. A run of 6 helical transmembrane segments spans residues Ile57–Val77, Leu102–Phe122, Leu176–Met196, Ile203–Val223, Val281–Trp301, and Met312–Ile332. The ABC transporter 1 domain maps to Leu380 to Lys622. Gly413–Ser420 contacts ATP. Asn467 carries N-linked (GlcNAc...) asparagine glycosylation. The disordered stretch occupies residues Asp627–Asn654. 6 consecutive transmembrane segments (helical) span residues Leu707 to Phe727, Gly753 to Leu773, Gly831 to Trp851, Leu855 to Leu875, Ile931 to Leu951, and Phe968 to Phe988. The ABC transmembrane type-1 2 domain occupies Ala713 to Lys996. Asn1037 carries N-linked (GlcNAc...) asparagine glycosylation. Residues Val1043–Met1281 form the ABC transporter 2 domain. Gly1078 to Ser1085 is an ATP binding site. N-linked (GlcNAc...) asparagine glycosylation is present at Asn1138.

The protein belongs to the ABC transporter superfamily. ABCB family. Multidrug resistance exporter (TC 3.A.1.201) subfamily.

It localises to the membrane. It participates in secondary metabolite biosynthesis. In terms of biological role, ABC-type transporter; part of the gene cluster that mediates the biosynthesis of the isoquinoline alkaloids fumisoquin A, fumisoquin B and fumisoquin C; as well as small amounts of fumipyrrole as a shunt metabolite. The products of the cluster lead to a brown coloration and are important for growth and conidiation. FsqE possibly plays a role of self-protection. This is ABC-type transporter fsqE from Aspergillus fumigatus (strain ATCC MYA-4609 / CBS 101355 / FGSC A1100 / Af293) (Neosartorya fumigata).